A 500-amino-acid polypeptide reads, in one-letter code: Lysine--tRNA ligase (500 aa).

E410 and E417 together coordinate Mg(2+).

It belongs to the class-II aminoacyl-tRNA synthetase family. As to quaternary structure, homodimer. Requires Mg(2+) as cofactor.

It localises to the cytoplasm. The enzyme catalyses tRNA(Lys) + L-lysine + ATP = L-lysyl-tRNA(Lys) + AMP + diphosphate. This Shewanella putrefaciens (strain CN-32 / ATCC BAA-453) protein is Lysine--tRNA ligase.